The following is a 519-amino-acid chain: Histidine--tRNA ligase (519 aa).

This sequence belongs to the class-II aminoacyl-tRNA synthetase family. As to quaternary structure, homodimer.

Its subcellular location is the cytoplasm. The catalysed reaction is tRNA(His) + L-histidine + ATP = L-histidyl-tRNA(His) + AMP + diphosphate + H(+). In Roseobacter denitrificans (strain ATCC 33942 / OCh 114) (Erythrobacter sp. (strain OCh 114)), this protein is Histidine--tRNA ligase.